A 456-amino-acid polypeptide reads, in one-letter code: Pantothenate kinase 2, mitochondrial (456 aa).

The disordered stretch occupies residues 16-89; it reads AGRFGAPMER…TSAGRPRAEG (74 aa). 2 stretches are compositionally biased toward low complexity: residues 28–39 and 55–65; these read RAAATSAAVGES and SSAAPSGSGEA. 3 positions are modified to phosphoserine: serine 55, serine 56, and serine 75. A Nuclear export signal motif is present at residues 154-161; it reads LELKDLTL. The active-site Proton acceptor is the glutamate 224. 3 residues coordinate acetyl-CoA: serine 278, serine 281, and arginine 293.

The protein belongs to the type II pantothenate kinase family. In terms of assembly, homodimer.

It localises to the cytoplasm. It is found in the cytosol. It catalyses the reaction (R)-pantothenate + ATP = (R)-4'-phosphopantothenate + ADP + H(+). It participates in cofactor biosynthesis; coenzyme A biosynthesis; CoA from (R)-pantothenate: step 1/5. Its activity is regulated as follows. Inhibited by acetyl-CoA. Inhibited by calcium hopantenate. Activated by palmitoylcarnitine. Its function is as follows. Catalyzes the phosphorylation of pantothenate to generate 4'-phosphopantothenate in the first and rate-determining step of coenzyme A (CoA) synthesis. In Mus musculus (Mouse), this protein is Pantothenate kinase 2, mitochondrial (Pank2).